The primary structure comprises 239 residues: Transcriptional regulatory protein BtsR (239 aa).

The region spanning 3 to 116 (KVLIVDDEPL…RLEKTLARLR (114 aa)) is the Response regulatory domain. Residue Asp-54 is modified to 4-aspartylphosphate. Residues 137–239 (IPCTGHSRIY…LKSLKEAIGL (103 aa)) form the HTH LytTR-type domain.

Post-translationally, phosphorylated by BtsS.

Member of the two-component regulatory system BtsS/BtsR. BtsR regulates expression of btsT by binding to its promoter region. The sequence is that of Transcriptional regulatory protein BtsR from Shigella flexneri.